The sequence spans 323 residues: Aldo-keto reductase family 1 member C23-like protein (323 aa).

An NADP(+)-binding site is contributed by 20–24 (GFGTY). A substrate-binding site is contributed by Lys-31. An NADP(+)-binding site is contributed by Asp-50. The Proton donor role is filled by Tyr-55. Residue His-117 participates in substrate binding. Residues 166–167 (SN), Gln-190, 216–222 (YGALGTQ), and 270–280 (KSYNEKRIKEN) contribute to the NADP(+) site.

Belongs to the aldo/keto reductase family. In terms of assembly, monomer. In terms of tissue distribution, detected in endometrium surface epithelium (at protein level). Detected in endometrium.

Its subcellular location is the cytoplasm. Its function is as follows. NADP-dependent oxidoreductase involved in steroid metabolism. May act on various hydroxysteroids. In Equus caballus (Horse), this protein is Aldo-keto reductase family 1 member C23-like protein (PGFS).